A 135-amino-acid polypeptide reads, in one-letter code: Classical arabinogalactan protein 4 (135 aa).

An N-terminal signal peptide occupies residues 1–21 (MGSKIVQVFLMLALFATSALA). Gln-22 carries the pyrrolidone carboxylic acid modification. A disordered region spans residues 22–112 (QAPAPTPTAT…PSDASPAPSA (91 aa)). Pro-24, Pro-26, Pro-28, Pro-32, Pro-33, Pro-34, Pro-37, Pro-38, and Pro-39 each carry 4-hydroxyproline. Pro-24, Pro-26, Pro-28, Pro-32, Pro-33, Pro-34, Pro-37, Pro-38, and Pro-39 each carry an O-linked (Ara...) hydroxyproline glycan. Positions 25–76 (APTPTATPPPATPPPVATPPPVATPPPAATPAPATPPPAATPAPATTPPSVA) are enriched in pro residues. A compositionally biased stretch (low complexity) spans 96-112 (SPSSAPGPSDASPAPSA). Residue Ser-111 is the site of GPI-anchor amidated serine attachment. A propeptide spans 112 to 135 (AAFSNKAFFAGTAFAAIMYAAVLA) (removed in mature form).

This sequence belongs to the classical AGP family. Post-translationally, O-glycosylated on hydroxyprolines; noncontiguous hydroxylproline residues are glycosylated with arabinogalactan. In terms of tissue distribution, highly expressed in roots, flowers and leaves.

It is found in the cell membrane. Its function is as follows. Proteoglycan that seems to be implicated in diverse developmental roles such as differentiation, cell-cell recognition, embryogenesis and programmed cell death. The polypeptide is Classical arabinogalactan protein 4 (AGP4) (Arabidopsis thaliana (Mouse-ear cress)).